Consider the following 268-residue polypeptide: NADH-quinone oxidoreductase subunit B 1 (268 aa).

4 residues coordinate [4Fe-4S] cluster: C42, C43, C108, and C138.

This sequence belongs to the complex I 20 kDa subunit family. NDH-1 is composed of 14 different subunits. Subunits NuoB, C, D, E, F, and G constitute the peripheral sector of the complex. [4Fe-4S] cluster serves as cofactor.

The protein resides in the cell membrane. The enzyme catalyses a quinone + NADH + 5 H(+)(in) = a quinol + NAD(+) + 4 H(+)(out). Its function is as follows. NDH-1 shuttles electrons from NADH, via FMN and iron-sulfur (Fe-S) centers, to quinones in the respiratory chain. The immediate electron acceptor for the enzyme in this species is believed to be ubiquinone. Couples the redox reaction to proton translocation (for every two electrons transferred, four hydrogen ions are translocated across the cytoplasmic membrane), and thus conserves the redox energy in a proton gradient. This Roseiflexus sp. (strain RS-1) protein is NADH-quinone oxidoreductase subunit B 1.